The chain runs to 109 residues: Period circadian protein (109 aa).

The interval 29 to 100 is disordered; the sequence is ITAPVDVDPH…TGTSSGSVQL (72 aa). Positions 69–97 are enriched in low complexity; sequence SGNFNSGSNLHIGSITNTSNTGTGTSSGS.

In terms of assembly, forms a heterodimer with timeless (TIM); the complex then translocates into the nucleus. In terms of processing, phosphorylated with a circadian rhythmicity, probably by the double-time protein (dbt). Phosphorylation could be implicated in the stability of per monomer and in the formation of heterodimer per-tim.

The protein localises to the nucleus. The protein resides in the cytoplasm. It is found in the perinuclear region. Essential for biological clock functions. Determines the period length of circadian and ultradian rhythms; an increase in PER dosage leads to shortened circadian rhythms and a decrease leads to lengthened circadian rhythms. Essential for the circadian rhythmicity of locomotor activity, eclosion behavior, and for the rhythmic component of the male courtship song that originates in the thoracic nervous system. The biological cycle depends on the rhythmic formation and nuclear localization of the TIM-PER complex. Light induces the degradation of TIM, which promotes elimination of PER. Nuclear activity of the heterodimer coordinatively regulates PER and TIM transcription through a negative feedback loop. Behaves as a negative element in circadian transcriptional loop. Does not appear to bind DNA, suggesting indirect transcriptional inhibition. The chain is Period circadian protein (per) from Loxocera albiseta (Rust fly).